Here is a 439-residue protein sequence, read N- to C-terminus: Glutamine synthetase (439 aa).

The region spanning 12–93 (SKIKFVQLVF…VYGFIYKDNK (82 aa)) is the GS beta-grasp domain. A GS catalytic domain is found at 99 to 439 (PRGILKRALE…EWELERYFFL (341 aa)). Glutamate 122 and glutamate 124 together coordinate Mg(2+). Residue glutamate 172 coordinates ATP. Glutamate 177 and glutamate 184 together coordinate Mg(2+). Glycine 229 is an L-glutamate binding site. Histidine 233 contacts Mg(2+). Residues 235–237 (HIS) and serine 237 contribute to the ATP site. Positions 283, 289, and 301 each coordinate L-glutamate. ATP contacts are provided by arginine 301, arginine 306, and lysine 313. Glutamate 318 is a binding site for Mg(2+). Arginine 320 is a binding site for L-glutamate.

It belongs to the glutamine synthetase family. In terms of assembly, oligomer of 12 subunits arranged in the form of two hexagons. Requires Mg(2+) as cofactor.

It localises to the cytoplasm. It carries out the reaction L-glutamate + NH4(+) + ATP = L-glutamine + ADP + phosphate + H(+). Probably involved in nitrogen metabolism via ammonium assimilation. Catalyzes the ATP-dependent biosynthesis of glutamine from glutamate and ammonia. This is Glutamine synthetase from Pyrococcus woesei.